Here is a 241-residue protein sequence, read N- to C-terminus: ATP synthase subunit a (241 aa).

Transmembrane regions (helical) follow at residues 29-49 (NSSL…LLGV), 86-106 (IPLV…GMLP), 114-134 (HVIV…IVGF), 144-164 (ILLP…IKLF), 177-197 (LAAN…FIMN), 200-220 (LILT…EVFV), and 221-241 (AILQ…DAVK).

It belongs to the ATPase A chain family. F-type ATPases have 2 components, CF(1) - the catalytic core - and CF(0) - the membrane proton channel. CF(1) has five subunits: alpha(3), beta(3), gamma(1), delta(1), epsilon(1). CF(0) has three main subunits: a(1), b(2) and c(9-12). The alpha and beta chains form an alternating ring which encloses part of the gamma chain. CF(1) is attached to CF(0) by a central stalk formed by the gamma and epsilon chains, while a peripheral stalk is formed by the delta and b chains.

It localises to the cell membrane. Key component of the proton channel; it plays a direct role in the translocation of protons across the membrane. This is ATP synthase subunit a from Wolbachia sp. subsp. Brugia malayi (strain TRS).